Here is a 426-residue protein sequence, read N- to C-terminus: Enolase (426 aa).

Q163 provides a ligand contact to (2R)-2-phosphoglycerate. E205 (proton donor) is an active-site residue. Mg(2+) contacts are provided by D242, E283, and D310. The (2R)-2-phosphoglycerate site is built by K335, R364, S365, and K386. K335 acts as the Proton acceptor in catalysis.

This sequence belongs to the enolase family. Mg(2+) is required as a cofactor.

It localises to the cytoplasm. It is found in the secreted. The protein resides in the cell surface. The enzyme catalyses (2R)-2-phosphoglycerate = phosphoenolpyruvate + H2O. It participates in carbohydrate degradation; glycolysis; pyruvate from D-glyceraldehyde 3-phosphate: step 4/5. In terms of biological role, catalyzes the reversible conversion of 2-phosphoglycerate (2-PG) into phosphoenolpyruvate (PEP). It is essential for the degradation of carbohydrates via glycolysis. The sequence is that of Enolase from Clavibacter sepedonicus (Clavibacter michiganensis subsp. sepedonicus).